Reading from the N-terminus, the 717-residue chain is MTILQLFLVFLNILEALCDYQLPKPRINKPPAEERLKLRNGYNTTLIEFDDGVQSFNLNWTKIIEHIPHDELIELWREANVTEPLVNTLLKRSDTYRPETNVHIPGHGNSYACALPYWSYTIDQWEDNKTTGYLGNFGIPSKTVLNEFFYDFQYVYTNRQFYTEATYVLNCLIGATTPAYPTISCHITPNYLFVSVEFTKFDSLTLLFGHSHYLPPLKGHIVYNDIEGASNDVFSLVIFSTYDLFGKHVESFKFDIAKVFREIIETPPLTFIKNLQDEMFTIEIRDGCNINNIVNPKTFLFAFKAVVAHFLVIDSLRTQQHILLNCFANYMSELEFLRKLMESCFEFFEFDFPYTVIETLAASQALNVPKHVITSLSHQDKTNMLSLFRLSRHSKHVSAVAISEIIDLISHIYTAYSYTYMLTSSERKMLLDAYIVLNDIMHKNETVKKQDLLPYVLSSSMCTSLEIGNLLLHFGQKDVLDVYETFSPCYLSLRFDFTKEKLITEFPQSSLIAQKEINLGTNGFFQTLHMRHHTSLEILPIIKCIKSLSTDIILSIPLKNITYVISTKPVPNSKIYDVSEVFLKTSMIISAVNNDCKPYQGGSAAHQIPVIYNVTVPRRGCPYCSSVVLSYDESQGFQSMMYITDTYVQENLFTEHSPFFGDGNLHIHYLILMNNGTVIEVRGAYRARLVNFIIVIMVFILFLVGLYLLYKLFVYLT.

The first 18 residues, 1–18 (MTILQLFLVFLNILEALC), serve as a signal peptide directing secretion. Topologically, residues 19–693 (DYQLPKPRIN…AYRARLVNFI (675 aa)) are virion surface. Asn-43, Asn-59, Asn-80, and Asn-128 each carry an N-linked (GlcNAc...) asparagine; by host glycan. Residues 177–239 (TPAYPTISCH…SNDVFSLVIF (63 aa)) are interaction with gL. Residues Asn-444, Asn-560, Asn-613, and Asn-675 are each glycosylated (N-linked (GlcNAc...) asparagine; by host). The helical transmembrane segment at 694–714 (IVIMVFILFLVGLYLLYKLFV) threads the bilayer. The Intravirion segment spans residues 715–717 (YLT).

It belongs to the herpesviridae glycoprotein H family. In terms of assembly, interacts with glycoprotein L (gL); this interaction is necessary for the correct processing and cell surface expression of gH. The heterodimer gH/gL seems to interact with gB trimers during fusion. N-glycosylated, O-glycosylated, and sialylated.

The protein resides in the virion membrane. It localises to the host cell membrane. It is found in the host endosome membrane. Its function is as follows. The heterodimer glycoprotein H-glycoprotein L is required for the fusion of viral and plasma membranes leading to virus entry into the host cell. Following initial binding to host receptor, membrane fusion is mediated by the fusion machinery composed of gB and the heterodimer gH/gL. May also be involved in the fusion between the virion envelope and the outer nuclear membrane during virion morphogenesis. The polypeptide is Envelope glycoprotein H (Saimiriine herpesvirus 2 (strain 11) (SaHV-2)).